Here is a 129-residue protein sequence, read N- to C-terminus: Histone H2A.J (129 aa).

The segment at 1–22 (MSGRGKQGGKVRAKAKSRSSRA) is disordered. Residues K6 and K10 each carry the N6-acetyllysine modification. The segment covering 7–19 (QGGKVRAKAKSRS) has biased composition (basic residues). Position 10 is an N6-lactoyllysine; alternate (K10). The residue at position 105 (Q105) is an N5-methylglutamine. T121 carries the phosphothreonine; by DCAF1 modification.

This sequence belongs to the histone H2A family. In terms of assembly, the nucleosome is a histone octamer containing two molecules each of H2A, H2B, H3 and H4 assembled in one H3-H4 heterotetramer and two H2A-H2B heterodimers. The octamer wraps approximately 147 bp of DNA. Post-translationally, monoubiquitination of Lys-120 (H2AXK119ub) gives a specific tag for epigenetic transcriptional repression. Following DNA double-strand breaks (DSBs), it is ubiquitinated through 'Lys-63' linkage of ubiquitin moieties. Glutamine methylation at Gln-105 (H2AQ104me) by FBL is specifically dedicated to polymerase I. It is present at 35S ribosomal DNA locus and impairs binding of the FACT complex. In terms of processing, phosphorylation on Ser-2 (H2AS1ph) is enhanced during mitosis. Phosphorylation on Ser-2 by RPS6KA5/MSK1 directly represses transcription. Acetylation of H3 inhibits Ser-2 phosphorylation by RPS6KA5/MSK1. Phosphorylation at Thr-121 (H2AT120ph) by DCAF1 is present in the regulatory region of many tumor suppresor genes and down-regulates their transcription.

The protein localises to the nucleus. It is found in the chromosome. Functionally, core component of nucleosome. Nucleosomes wrap and compact DNA into chromatin, limiting DNA accessibility to the cellular machineries which require DNA as a template. Histones thereby play a central role in transcription regulation, DNA repair, DNA replication and chromosomal stability. DNA accessibility is regulated via a complex set of post-translational modifications of histones, also called histone code, and nucleosome remodeling. In Mus musculus (Mouse), this protein is Histone H2A.J.